Reading from the N-terminus, the 511-residue chain is ATP synthase subunit alpha (511 aa).

169–176 contributes to the ATP binding site; the sequence is GDRQTGKT.

Belongs to the ATPase alpha/beta chains family. As to quaternary structure, F-type ATPases have 2 components, CF(1) - the catalytic core - and CF(0) - the membrane proton channel. CF(1) has five subunits: alpha(3), beta(3), gamma(1), delta(1), epsilon(1). CF(0) has three main subunits: a(1), b(2) and c(9-12). The alpha and beta chains form an alternating ring which encloses part of the gamma chain. CF(1) is attached to CF(0) by a central stalk formed by the gamma and epsilon chains, while a peripheral stalk is formed by the delta and b chains.

Its subcellular location is the cell inner membrane. The catalysed reaction is ATP + H2O + 4 H(+)(in) = ADP + phosphate + 5 H(+)(out). Functionally, produces ATP from ADP in the presence of a proton gradient across the membrane. The alpha chain is a regulatory subunit. This is ATP synthase subunit alpha from Bartonella bacilliformis (strain ATCC 35685 / KC583 / Herrer 020/F12,63).